The following is a 287-amino-acid chain: Pantothenate synthetase (287 aa).

30–37 serves as a coordination point for ATP; the sequence is MGNLHSGH. Residue H37 is the Proton donor of the active site. Q61 is a (R)-pantoate binding site. Q61 contributes to the beta-alanine binding site. Residue 149-152 participates in ATP binding; sequence GEKD. Q155 provides a ligand contact to (R)-pantoate. Residues V178 and 186–189 contribute to the ATP site; that span reads LSSR.

This sequence belongs to the pantothenate synthetase family. In terms of assembly, homodimer.

The protein localises to the cytoplasm. It carries out the reaction (R)-pantoate + beta-alanine + ATP = (R)-pantothenate + AMP + diphosphate + H(+). It participates in cofactor biosynthesis; (R)-pantothenate biosynthesis; (R)-pantothenate from (R)-pantoate and beta-alanine: step 1/1. Functionally, catalyzes the condensation of pantoate with beta-alanine in an ATP-dependent reaction via a pantoyl-adenylate intermediate. The protein is Pantothenate synthetase of Pseudomonas putida (strain GB-1).